The primary structure comprises 498 residues: Zinc finger protein 395 (498 aa).

Residues 129 to 165 (QKPLSSPIEQSLPTSPGATSTSAQRSVSRSIDVPKRR) are disordered. The segment covering 130 to 157 (KPLSSPIEQSLPTSPGATSTSAQRSVSR) has biased composition (polar residues). The Nuclear export signal signature appears at 171 to 180 (MDEMMAAMVL). Residues 209-245 (KEGGDVSDSGSSTTSGHWSASSGVSTPSPPHTDASPK) form a disordered region. A compositionally biased stretch (low complexity) spans 214–231 (VSDSGSSTTSGHWSASSG). Residues 285 to 310 (YKCLWPNCGKLLRSIVGIKRHVKTQH) form a C2H2-type zinc finger.

It localises to the cytoplasm. The protein localises to the nucleus. The protein is Zinc finger protein 395 (znf395) of Xenopus laevis (African clawed frog).